The chain runs to 369 residues: Molybdenum import ATP-binding protein ModC 1 (369 aa).

Residues 10–240 (KGYIEVAFNG…PALASRSEAA (231 aa)) enclose the ABC transporter domain. 42 to 49 (GPPGCGKT) provides a ligand contact to ATP. The Mop domain maps to 297–367 (ASSILNVFRA…ELCGKLGDDG (71 aa)).

Belongs to the ABC transporter superfamily. Molybdate importer (TC 3.A.1.8) family. In terms of assembly, the complex is composed of two ATP-binding proteins (ModC), two transmembrane proteins (ModB) and a solute-binding protein (ModA).

The protein localises to the cell inner membrane. The enzyme catalyses molybdate(out) + ATP + H2O = molybdate(in) + ADP + phosphate + H(+). Part of the ABC transporter complex ModABC involved in molybdenum import. Responsible for energy coupling to the transport system. This is Molybdenum import ATP-binding protein ModC 1 from Bradyrhizobium diazoefficiens (strain JCM 10833 / BCRC 13528 / IAM 13628 / NBRC 14792 / USDA 110).